The following is a 237-amino-acid chain: Ras-related protein Rab-23 (237 aa).

Ala-19 is a binding site for GDP. Residues Val-20, Gly-21, Lys-22, Ser-23, and Ser-24 each contribute to the GTP site. GDP contacts are provided by Gly-21, Lys-22, Ser-23, Ser-24, and Asp-37. A Mg(2+)-binding site is contributed by Ser-23. Positions 28 to 46 match the Switch 1 motif; that stretch reads RYCKGIFTKDYKKTIGVDF. Tyr-38 is a binding site for GTP. A GDP-binding site is contributed by Lys-40. Position 41 (Thr-41) interacts with GTP. Positions 41 and 64 each coordinate Mg(2+). The short motif at 65–84 is the Switch 2 element; it reads TAGQEEFDAITKAYYRGAQA. The GTP site is built by Gly-67, Asn-121, Lys-122, Asp-124, Ser-151, Val-152, and Lys-153. GDP is bound by residues Asn-121, Lys-122, and Asp-124. Val-152 and Lys-153 together coordinate GDP. Ser-186 and Ser-187 each carry phosphoserine. The disordered stretch occupies residues 204–237; sequence QNSSSLNGGDVINLRPNKQRTKRTRNPFSSCSVP. Cys-234 carries the cysteine methyl ester modification. Cys-234 carries S-geranylgeranyl cysteine lipidation. Positions 235-237 are cleaved as a propeptide — removed in mature form; that stretch reads SVP.

Belongs to the small GTPase superfamily. Rab family. As to quaternary structure, interacts with SUFU. Requires Mg(2+) as cofactor. As to expression, detected in brain neurons (at protein level). Forebrain and midbrain.

It is found in the cell membrane. Its subcellular location is the cytoplasm. It localises to the endosome membrane. The protein resides in the cytoplasmic vesicle. The protein localises to the autophagosome. It is found in the phagosome. Its subcellular location is the phagosome membrane. The enzyme catalyses GTP + H2O = GDP + phosphate + H(+). Its activity is regulated as follows. Regulated by guanine nucleotide exchange factors (GEFs) which promote the exchange of bound GDP for free GTP. Regulated by GTPase activating proteins (GAPs) which increase the GTP hydrolysis activity. Inhibited by GDP dissociation inhibitors (GDIs). Functionally, the small GTPases Rab are key regulators of intracellular membrane trafficking, from the formation of transport vesicles to their fusion with membranes. Rabs cycle between an inactive GDP-bound form and an active GTP-bound form that is able to recruit to membranes different set of downstream effectors directly responsible for vesicle formation, movement, tethering and fusion. Plays a role in autophagic vacuole assembly, and mediates defense against pathogens, such as S.aureus, by promoting their capture by autophagosomes that then merge with lysosomes. Together with SUFU, prevents nuclear import of GLI1, and thereby inhibits GLI1 transcription factor activity. Regulates GLI1 in differentiating chondrocytes. Likewise, regulates GLI3 proteolytic processing and modulates GLI2 and GLI3 transcription factor activity. The sequence is that of Ras-related protein Rab-23 from Mus musculus (Mouse).